The primary structure comprises 449 residues: TNF receptor-associated factor family protein DDB_G0272340 (449 aa).

An RING-type; degenerate zinc finger spans residues 33–76; sequence CPICEECIMDVNKCEALQCKEGHVHCRLCWMKSLESKKECMTCR. 2 consecutive TRAF-type zinc fingers follow at residues 133–187 and 189–251; these read GHIK…IDDS and VHYS…SELS. A coiled-coil region spans residues 263-309; the sequence is MEATIDQHICKFEKSEKEYKKLELEYNRLKDDFKILQSELKVIRELK. The MATH domain occupies 311–437; it reads NYQNKWVITN…QNSVTLNINI (127 aa).

Belongs to the TNF receptor-associated factor family. A subfamily.

The protein resides in the cytoplasm. Its function is as follows. Probable adapter protein and signal transducer that links members of the tumor necrosis factor receptor family to different signaling pathways by association with the receptor cytoplasmic domain and kinases. The protein is TNF receptor-associated factor family protein DDB_G0272340 of Dictyostelium discoideum (Social amoeba).